A 159-amino-acid chain; its full sequence is Cytochrome c-type biogenesis protein CcmE (159 aa).

The Cytoplasmic portion of the chain corresponds to 1–8; that stretch reads MNIRRKNR. Residues 9 to 29 traverse the membrane as a helical; Signal-anchor for type II membrane protein segment; sequence LWIACAVLAGLALTIGLVLYA. Residues 30–159 are Periplasmic-facing; the sequence is LRSNIDLFYT…PASVYKDPAS (130 aa). Heme contacts are provided by His-130 and Tyr-134. The span at 132–147 shows a compositional bias: basic and acidic residues; it reads ENYTPPEVEKAMEANH. The tract at residues 132 to 159 is disordered; the sequence is ENYTPPEVEKAMEANHRRPASVYKDPAS.

It belongs to the CcmE/CycJ family.

It is found in the cell inner membrane. Heme chaperone required for the biogenesis of c-type cytochromes. Transiently binds heme delivered by CcmC and transfers the heme to apo-cytochromes in a process facilitated by CcmF and CcmH. The polypeptide is Cytochrome c-type biogenesis protein CcmE (Escherichia coli (strain 55989 / EAEC)).